The following is a 415-amino-acid chain: Fructose-like permease IIC component (415 aa).

At 1-46 (MAIKKRSATVVPGASGAAAAVKNLQASKSSFWGELPQHVMSGISRM) the chain is on the cytoplasmic side. Residues 35-415 (LPQHVMSGIS…RKGKLLIDSL (381 aa)) enclose the PTS EIIC type-2 domain. Residues 47–67 (VPTLIMGGVILAFSQLIAYSW) traverse the membrane as a helical segment. At 68–101 (LKIPAEIGIMDALNSGKFSGFDLSLLKFAWLSQS) the chain is on the periplasmic side. A helical membrane pass occupies residues 102-122 (FGGVLFGFAIPMFAAFVANSI). The Cytoplasmic segment spans residues 123 to 126 (GGKL). Residues 127 to 147 (AFPAGFIGGLMSTQPTQLLNF) traverse the membrane as a helical segment. Residues 148-157 (DPSTMQWATS) are Periplasmic-facing. The chain crosses the membrane as a helical span at residues 158–178 (SPVPSTFIGALIISIVAGYLV). Topologically, residues 179–197 (KWMNQKIQLPDFLLAFKTT) are cytoplasmic. A helical transmembrane segment spans residues 198–218 (FLLPILSAIFVMLAMYYVITP). Residues 219–237 (FGGWINGGIRTVLTAAGEK) lie on the Periplasmic side of the membrane. Residues 238–258 (GALMYAMGIAAATAIDLGGPI) form a helical membrane-spanning segment. Over 259 to 276 (NKAAGFVAFSFTTDHVLP) the chain is Cytoplasmic. Residues 277-297 (VTARSIAIVIPPIGLGLATII) traverse the membrane as a helical segment. Residues 298-318 (DRRLTGKRLFNAQLYPQGKTA) lie on the Periplasmic side of the membrane. Residues 319-339 (MFLAFMGISEGAIPFALESPI) traverse the membrane as a helical segment. Topologically, residues 340-341 (TA) are cytoplasmic. Residues 342-362 (IPSYMVGAIVGSTAAVWLGAV) form a helical membrane-spanning segment. Topologically, residues 363-378 (QWFPESAIWAWPLVTN) are periplasmic. The helical transmembrane segment at 379 to 399 (LGVYMAGIALGAIITALMVVF) threads the bilayer. Over 400–415 (LRLMMFRKGKLLIDSL) the chain is Cytoplasmic.

The protein localises to the cell inner membrane. Its function is as follows. The phosphoenolpyruvate-dependent sugar phosphotransferase system (PTS), a major carbohydrate active -transport system, catalyzes the phosphorylation of incoming sugar substrates concomitant with their translocation across the cell membrane. In Shigella flexneri, this protein is Fructose-like permease IIC component (fryC).